We begin with the raw amino-acid sequence, 322 residues long: Hydroxypyruvate reductase (322 aa).

Residues 160 to 161, D180, 211 to 212, 238 to 240, and D264 each bind NAD(+); these read RI, CP, and NSR. Residue R240 is part of the active site. E269 is a catalytic residue. The active-site Proton donor is H288.

It belongs to the D-isomer specific 2-hydroxyacid dehydrogenase family.

It catalyses the reaction (R)-glycerate + NAD(+) = 3-hydroxypyruvate + NADH + H(+). The protein operates within carbohydrate metabolism. Functionally, involved in catabolism of D-apiose. Catalyzes the reduction of 3-hydroxypyruvate to glycerate. In Blautia hydrogenotrophica (strain DSM 10507 / JCM 14656 / S5a33) (Ruminococcus hydrogenotrophicus), this protein is Hydroxypyruvate reductase.